Consider the following 768-residue polypeptide: 5-methyltetrahydropteroyltriglutamate--homocysteine methyltransferase (768 aa).

Residues 17-20 (RELK) and Lys117 contribute to the 5-methyltetrahydropteroyltri-L-glutamate site. L-homocysteine is bound by residues 442–444 (IGS) and Glu495. L-methionine is bound by residues 442–444 (IGS) and Glu495. Residues 526–527 (RC) and Trp572 each bind 5-methyltetrahydropteroyltri-L-glutamate. Asp610 contributes to the L-homocysteine binding site. Position 610 (Asp610) interacts with L-methionine. Residue Glu616 coordinates 5-methyltetrahydropteroyltri-L-glutamate. Zn(2+) is bound by residues His653, Cys655, and Glu677. His706 serves as the catalytic Proton donor. Cys738 lines the Zn(2+) pocket.

It belongs to the vitamin-B12 independent methionine synthase family. Requires Zn(2+) as cofactor.

The enzyme catalyses 5-methyltetrahydropteroyltri-L-glutamate + L-homocysteine = tetrahydropteroyltri-L-glutamate + L-methionine. It participates in amino-acid biosynthesis; L-methionine biosynthesis via de novo pathway; L-methionine from L-homocysteine (MetE route): step 1/1. Its function is as follows. Catalyzes the transfer of a methyl group from 5-methyltetrahydrofolate to homocysteine resulting in methionine formation. The chain is 5-methyltetrahydropteroyltriglutamate--homocysteine methyltransferase from Bifidobacterium adolescentis (strain ATCC 15703 / DSM 20083 / NCTC 11814 / E194a).